Reading from the N-terminus, the 482-residue chain is ATP synthase subunit beta (482 aa).

Residue 168–175 (GGAGVGKT) coordinates ATP.

The protein belongs to the ATPase alpha/beta chains family. In terms of assembly, F-type ATPases have 2 components, CF(1) - the catalytic core - and CF(0) - the membrane proton channel. CF(1) has five subunits: alpha(3), beta(3), gamma(1), delta(1), epsilon(1). CF(0) has three main subunits: a(1), b(2) and c(9-12). The alpha and beta chains form an alternating ring which encloses part of the gamma chain. CF(1) is attached to CF(0) by a central stalk formed by the gamma and epsilon chains, while a peripheral stalk is formed by the delta and b chains.

The protein resides in the cell membrane. It catalyses the reaction ATP + H2O + 4 H(+)(in) = ADP + phosphate + 5 H(+)(out). In terms of biological role, produces ATP from ADP in the presence of a proton gradient across the membrane. The catalytic sites are hosted primarily by the beta subunits. This chain is ATP synthase subunit beta, found in Nocardia farcinica (strain IFM 10152).